The sequence spans 533 residues: Dipeptidase (533 aa).

Residue Cys3 is part of the active site.

The protein belongs to the peptidase C69 family.

The enzyme catalyses an L-aminoacyl-L-amino acid + H2O = 2 an L-alpha-amino acid. Functionally, hydrolyzes a wide range of dipeptides. Highest activity against Ala-Gln. The sequence is that of Dipeptidase from Bifidobacterium longum (strain NCC 2705).